An 881-amino-acid chain; its full sequence is Valine--tRNA ligase (881 aa).

Residues 48–58 (PNITGKLHLGH) carry the 'HIGH' region motif. Positions 527–531 (KMSKS) match the 'KMSKS' region motif. Lysine 530 lines the ATP pocket. Coiled-coil stretches lie at residues 721-747 (KNET…AEMN) and 811-881 (LLDL…AALK).

The protein belongs to the class-I aminoacyl-tRNA synthetase family. ValS type 1 subfamily. Monomer.

It localises to the cytoplasm. The catalysed reaction is tRNA(Val) + L-valine + ATP = L-valyl-tRNA(Val) + AMP + diphosphate. Its function is as follows. Catalyzes the attachment of valine to tRNA(Val). As ValRS can inadvertently accommodate and process structurally similar amino acids such as threonine, to avoid such errors, it has a 'posttransfer' editing activity that hydrolyzes mischarged Thr-tRNA(Val) in a tRNA-dependent manner. The protein is Valine--tRNA ligase of Clostridium acetobutylicum (strain ATCC 824 / DSM 792 / JCM 1419 / IAM 19013 / LMG 5710 / NBRC 13948 / NRRL B-527 / VKM B-1787 / 2291 / W).